A 278-amino-acid polypeptide reads, in one-letter code: uncharacterized protein (278 aa).

Over residues 1-11 the composition is skewed to basic and acidic residues; it reads MMIHIHQDKKM. 2 disordered regions span residues 1-107 and 206-278; these read MMIH…RYFK and KVSA…KASR. Over residues 62 to 94 the composition is skewed to low complexity; sequence KQSGGKNAKSGSKSAKSGSKSAKSGSKTSKTQS. Basic and acidic residues predominate over residues 97–107; the sequence is KGDESRDRYFK. The segment covering 249–260 has biased composition (polar residues); sequence SAKNAKSTGNKK. Low complexity predominate over residues 264–278; it reads KSAGAKKAPAAKASR.

This is an uncharacterized protein from Acanthamoeba polyphaga mimivirus (APMV).